Consider the following 375-residue polypeptide: Serine protease 23 (375 aa).

The signal sequence occupies residues 1–23 (MAGTPGHPIFLLLLLRAIGQVSP). Residue N93 is glycosylated (N-linked (GlcNAc...) asparagine). Residues C153 and C169 are joined by a disulfide bond. H168 functions as the Charge relay system in the catalytic mechanism. N-linked (GlcNAc...) asparagine glycosylation is present at N199. Residues D232 and S308 each act as charge relay system in the active site.

This sequence belongs to the peptidase S1 family.

It is found in the secreted. The chain is Serine protease 23 (PRSS23) from Bos taurus (Bovine).